The following is a 977-amino-acid chain: Alanine--tRNA ligase (977 aa).

Residues 512–535 form a disordered region; sequence SQVDSKLQSSTPAGTGSYDSKQVS. 4 residues coordinate Zn(2+): H618, H622, C720, and H724.

Belongs to the class-II aminoacyl-tRNA synthetase family. It depends on Zn(2+) as a cofactor.

It localises to the cytoplasm. It carries out the reaction tRNA(Ala) + L-alanine + ATP = L-alanyl-tRNA(Ala) + AMP + diphosphate. In terms of biological role, catalyzes the attachment of alanine to tRNA(Ala) in a two-step reaction: alanine is first activated by ATP to form Ala-AMP and then transferred to the acceptor end of tRNA(Ala). Also edits incorrectly charged Ser-tRNA(Ala) and Gly-tRNA(Ala) via its editing domain. The sequence is that of Alanine--tRNA ligase from Leptospira interrogans serogroup Icterohaemorrhagiae serovar copenhageni (strain Fiocruz L1-130).